A 1093-amino-acid polypeptide reads, in one-letter code: Protein AF-17 (1093 aa).

The segment at 5 to 57 adopts a PHD-type 1 zinc-finger fold; the sequence is VGGCCVCSDERGWAENPLVYCDGHACSVAVHQACYGIVQVPTGPWFCRKCESQ. Residues 62–95 form a C2HC pre-PHD-type zinc finger; the sequence is RVRCELCPHKDGALKRTDNGGWAHVVCALYIPEV. A PHD-type 2 zinc finger spans residues 118-181; that stretch reads KTCYICEEQG…KYCGYCKYHF (64 aa). The interval 185 to 500 is disordered; sequence KTSRHSSGGG…GGPAAPSLPS (316 aa). Over residues 191–212 the composition is skewed to gly residues; it reads SGGGGGGAGGGGGSMGGGGSGF. Over residues 231 to 255 the composition is skewed to basic residues; it reads PTHHERGQKKSRKDKERLKQKHKKR. Phosphoserine is present on Ser258. The segment covering 258 to 268 has biased composition (pro residues); that stretch reads SPPSILTPPVV. Positions 282–300 are enriched in basic and acidic residues; that stretch reads SHHEASTQETSESSRESKG. Residues 301–316 show a composition bias toward basic residues; the sequence is KKSSSHSLSHKGKKLS. A compositionally biased stretch (low complexity) spans 317–340; the sequence is SGKGVSSFTSASSSSSSSSSSSGG. The span at 345–354 shows a compositional bias: polar residues; sequence AVSSLQSSPD. Positions 374–388 are enriched in pro residues; sequence APAPSAPPSPSAPEP. Phosphoserine is present on residues Ser378 and Ser423. Positions 410–425 are enriched in low complexity; that stretch reads STTTSSSGRARAPSPG. A Phosphothreonine modification is found at Thr451. Basic residues predominate over residues 465–484; sequence EKKHKASKRSRHGPGRPKGS. The interval 729 to 764 is leucine-zipper; that stretch reads LQKENQRLQEQILSLTAKKERLQILNVQLSVPFPAL. Disordered regions lie at residues 775–871 and 1060–1093; these read VPGP…RAPG and QTNP…QEKG. The segment covering 787-796 has biased composition (low complexity); it reads SSDSLSTSKS. Residues 804–813 show a composition bias toward polar residues; sequence GLDNSLSTSS. Low complexity-rich tracts occupy residues 818–832 and 839–853; these read SGCP…SFHS and LLQQ…ALPG.

Interacts with histone H3; interaction is necessary for MLLT6 binding to nucleosomes; interaction is inhibited by histone H3 'Lys-27' methylations (H3K27me1, H3K27me2 and H3K27me3).

The protein resides in the nucleus. This chain is Protein AF-17 (MLLT6), found in Homo sapiens (Human).